A 220-amino-acid chain; its full sequence is Putative 3-methyladenine DNA glycosylase (220 aa).

This sequence belongs to the DNA glycosylase MPG family.

The chain is Putative 3-methyladenine DNA glycosylase from Rickettsia bellii (strain RML369-C).